We begin with the raw amino-acid sequence, 199 residues long: Oleosin 21.2 kDa (199 aa).

Residues 1–14 (MADTHRVDRTDRHF) show a composition bias toward basic and acidic residues. Positions 1-31 (MADTHRVDRTDRHFQFQSPYEGGRGQGQYEG) are disordered. A2 bears the N-acetylalanine mark. Residues 2–56 (ADTHRVDRTDRHFQFQSPYEGGRGQGQYEGDRGYGGGGYKSMMPESGPSSTQVLS) form a polar region. The segment covering 22–31 (GGRGQGQYEG) has biased composition (gly residues). The next 3 membrane-spanning stretches (helical) occupy residues 51-71 (STQV…LALA), 72-92 (GLLL…FLLF), and 96-116 (IVPA…SGMF). The interval 57 to 128 (LLIGVPVVGS…TGLSSISWVM (72 aa)) is hydrophobic. Positions 159 to 199 (KGKEMGQHVQNKAQDVKQYDISKPHDTTTKGHETQGRTTAA) are disordered. Residues 172-193 (QDVKQYDISKPHDTTTKGHETQ) show a composition bias toward basic and acidic residues.

This sequence belongs to the oleosin family.

The protein resides in the lipid droplet. It localises to the membrane. Functionally, may have a structural role to stabilize the lipid body during desiccation of the seed by preventing coalescence of the oil. Probably interacts with both lipid and phospholipid moieties of lipid bodies. May also provide recognition signals for specific lipase anchorage in lipolysis during seedling growth. The polypeptide is Oleosin 21.2 kDa (Arabidopsis thaliana (Mouse-ear cress)).